We begin with the raw amino-acid sequence, 408 residues long: MKDKVVLAYSGGLDTTAIIPWLKETYDYDVICCCINCGQGEELDGLDERAKLSGASKLYIEDICDEFSEDYIVPCVQAGAVYEHKYLLGTAMARPGIAKKLVEIARKEGAVAICHGATGKGNDQIRFELGIKALAPDIKVIAPWRQDNWKMDSREAEIEYCKAHGIDLPFGTDSSYSRDRNLWHISHEGLELEDPSQEPNYDHLLVLSVTPEHAPDEGEYVTMTFEKGVPTSVNGKKMKVADIIRELNRLGGKHGIGIIDIVENRVVGMKSRGVYETPGGTILMEAHDQLEELCLDRATMEVKKEMGNKLAQVVYEGKWFTPLREAIQAFVESTQEYVTGEVKFKLYKGNIIKAGTTSPYSLYSESLASFTTGDLYDHHDADGFITLFGLPLKVRAMKLLELENKKNN.

Residue 8–16 (AYSGGLDTT) coordinates ATP. Tyr-86 contacts L-citrulline. Gly-116 lines the ATP pocket. 3 residues coordinate L-aspartate: Thr-118, Asn-122, and Asp-123. Asn-122 is an L-citrulline binding site. Residues Arg-126, Ser-177, Ser-186, Glu-263, and Tyr-275 each contribute to the L-citrulline site.

The protein belongs to the argininosuccinate synthase family. Type 1 subfamily. Homotetramer.

The protein resides in the cytoplasm. The enzyme catalyses L-citrulline + L-aspartate + ATP = 2-(N(omega)-L-arginino)succinate + AMP + diphosphate + H(+). It participates in amino-acid biosynthesis; L-arginine biosynthesis; L-arginine from L-ornithine and carbamoyl phosphate: step 2/3. This is Argininosuccinate synthase from Agathobacter rectalis (strain ATCC 33656 / DSM 3377 / JCM 17463 / KCTC 5835 / VPI 0990) (Eubacterium rectale).